Reading from the N-terminus, the 327-residue chain is Glycerol-3-phosphate dehydrogenase [NAD(P)+] (327 aa).

NADPH is bound by residues Trp-13, His-33, and Lys-102. Sn-glycerol 3-phosphate is bound by residues Lys-102, Gly-130, and Ser-132. Position 134 (Ala-134) interacts with NADPH. Positions 185, 238, 248, 249, and 250 each coordinate sn-glycerol 3-phosphate. Lys-185 functions as the Proton acceptor in the catalytic mechanism. Residue Arg-249 participates in NADPH binding. Glu-275 is a binding site for NADPH.

It belongs to the NAD-dependent glycerol-3-phosphate dehydrogenase family.

The protein resides in the cytoplasm. It catalyses the reaction sn-glycerol 3-phosphate + NAD(+) = dihydroxyacetone phosphate + NADH + H(+). The catalysed reaction is sn-glycerol 3-phosphate + NADP(+) = dihydroxyacetone phosphate + NADPH + H(+). It functions in the pathway membrane lipid metabolism; glycerophospholipid metabolism. Catalyzes the reduction of the glycolytic intermediate dihydroxyacetone phosphate (DHAP) to sn-glycerol 3-phosphate (G3P), the key precursor for phospholipid synthesis. This is Glycerol-3-phosphate dehydrogenase [NAD(P)+] from Vesicomyosocius okutanii subsp. Calyptogena okutanii (strain HA).